A 195-amino-acid chain; its full sequence is MSGAAMSYPRSPWRGALPPMAVYGQHWARWAVGVNSLTARLRAASSSFRVELLGQGRALPLRDEWRCLGLPRAAETLAREVLLICDEAPVVYAHTIVHPRSVAADWPFLRALGTQPLGHALFADPRVARGAFEFALLDGRHPLVKRAHAALGGTPPGAMARLPARRSVFRRGVSAMLVTEVFLPALAVFDPPPMM.

Substrate is bound by residues arginine 79, leucine 117, and glutamate 180.

Belongs to the UbiC family.

It localises to the cytoplasm. It carries out the reaction chorismate = 4-hydroxybenzoate + pyruvate. It functions in the pathway cofactor biosynthesis; ubiquinone biosynthesis. Its function is as follows. Removes the pyruvyl group from chorismate, with concomitant aromatization of the ring, to provide 4-hydroxybenzoate (4HB) for the ubiquinone pathway. This chain is Probable chorismate pyruvate-lyase, found in Ralstonia nicotianae (strain ATCC BAA-1114 / GMI1000) (Ralstonia solanacearum).